Consider the following 615-residue polypeptide: Elongation factor 4 (615 aa).

The region spanning 14-196 (AMIRNFCIIA…EIVRQVPAPV (183 aa)) is the tr-type G domain. GTP is bound by residues 26–31 (DHGKST) and 143–146 (NKID).

Belongs to the TRAFAC class translation factor GTPase superfamily. Classic translation factor GTPase family. LepA subfamily.

The protein localises to the cell membrane. It catalyses the reaction GTP + H2O = GDP + phosphate + H(+). Required for accurate and efficient protein synthesis under certain stress conditions. May act as a fidelity factor of the translation reaction, by catalyzing a one-codon backward translocation of tRNAs on improperly translocated ribosomes. Back-translocation proceeds from a post-translocation (POST) complex to a pre-translocation (PRE) complex, thus giving elongation factor G a second chance to translocate the tRNAs correctly. Binds to ribosomes in a GTP-dependent manner. The polypeptide is Elongation factor 4 (Frankia alni (strain DSM 45986 / CECT 9034 / ACN14a)).